Here is a 335-residue protein sequence, read N- to C-terminus: Pyridoxal 5'-phosphate synthase subunit PdxS (335 aa).

Aspartate 30 serves as a coordination point for D-ribose 5-phosphate. Lysine 87 serves as the catalytic Schiff-base intermediate with D-ribose 5-phosphate. Residue glycine 159 coordinates D-ribose 5-phosphate. Residue arginine 171 coordinates D-glyceraldehyde 3-phosphate. Residues glycine 257 and 278–279 contribute to the D-ribose 5-phosphate site; that span reads GS.

Belongs to the PdxS/SNZ family. As to quaternary structure, in the presence of PdxT, forms a dodecamer of heterodimers.

It catalyses the reaction aldehydo-D-ribose 5-phosphate + D-glyceraldehyde 3-phosphate + L-glutamine = pyridoxal 5'-phosphate + L-glutamate + phosphate + 3 H2O + H(+). It functions in the pathway cofactor biosynthesis; pyridoxal 5'-phosphate biosynthesis. Its function is as follows. Catalyzes the formation of pyridoxal 5'-phosphate from ribose 5-phosphate (RBP), glyceraldehyde 3-phosphate (G3P) and ammonia. The ammonia is provided by the PdxT subunit. Can also use ribulose 5-phosphate and dihydroxyacetone phosphate as substrates, resulting from enzyme-catalyzed isomerization of RBP and G3P, respectively. In Pyrococcus furiosus (strain ATCC 43587 / DSM 3638 / JCM 8422 / Vc1), this protein is Pyridoxal 5'-phosphate synthase subunit PdxS.